Here is a 343-residue protein sequence, read N- to C-terminus: Hydroxymethylglutaryl-CoA synthase (343 aa).

(3S)-3-hydroxy-3-methylglutaryl-CoA is bound by residues aspartate 28 and alanine 29. Glutamate 80 (proton donor/acceptor) is an active-site residue. A (3S)-3-hydroxy-3-methylglutaryl-CoA-binding site is contributed by cysteine 112. Cysteine 112 serves as the catalytic Acyl-thioester intermediate. Arginine 198 is a CoA binding site. Positions 200 and 233 each coordinate (3S)-3-hydroxy-3-methylglutaryl-CoA. The Proton donor/acceptor role is filled by histidine 233. Lysine 238 is a binding site for CoA. (3S)-3-hydroxy-3-methylglutaryl-CoA is bound by residues arginine 242, asparagine 265, and serine 295.

Belongs to the thiolase-like superfamily. Archaeal HMG-CoA synthase family. Interacts with acetoacetyl-CoA thiolase that catalyzes the precedent step in the pathway and with a DUF35 protein. The acetoacetyl-CoA thiolase/HMG-CoA synthase complex channels the intermediate via a fused CoA-binding site, which allows for efficient coupling of the endergonic thiolase reaction with the exergonic HMGCS reaction.

The catalysed reaction is acetoacetyl-CoA + acetyl-CoA + H2O = (3S)-3-hydroxy-3-methylglutaryl-CoA + CoA + H(+). It participates in metabolic intermediate biosynthesis; (R)-mevalonate biosynthesis; (R)-mevalonate from acetyl-CoA: step 2/3. Catalyzes the condensation of acetyl-CoA with acetoacetyl-CoA to form 3-hydroxy-3-methylglutaryl-CoA (HMG-CoA). Functions in the mevalonate (MVA) pathway leading to isopentenyl diphosphate (IPP), a key precursor for the biosynthesis of isoprenoid compounds that are building blocks of archaeal membrane lipids. The chain is Hydroxymethylglutaryl-CoA synthase from Archaeoglobus fulgidus (strain ATCC 49558 / DSM 4304 / JCM 9628 / NBRC 100126 / VC-16).